The sequence spans 575 residues: Thrombomodulin (575 aa).

Residues 1–18 (MLGVLVLGALALAGLGFP) form the signal peptide. At 19–515 (APAEPQPGGS…TPPAVGLVHS (497 aa)) the chain is on the extracellular side. In terms of domain architecture, C-type lectin spans 31-169 (VEHDCFALYP…VKADGFLCEF (139 aa)). N-linked (GlcNAc...) asparagine glycans are attached at residues N47, N115, and N116. 19 disulfides stabilise this stretch: C137-C158, C245-C256, C252-C265, C267-C280, C288-C296, C292-C308, C310-C323, C329-C340, C336-C349, C351-C362, C369-C378, C374-C388, C390-C404, C408-C413, C417-C425, C427-C439, C445-C455, C451-C464, and C466-C480. EGF-like domains lie at 241-281 (GAWD…RSCT) and 284-324 (ATQS…HRCE). An EGF-like 3; calcium-binding domain is found at 325–363 (DVDDCILEPSPCPQRCVNTQGGFECHCYPNYDLVDGECV). N342 is subject to (3R)-3-hydroxyasparagine. EGF-like domains are found at residues 365-405 (PVDP…HRCQ) and 404-440 (CQMFCNQTACPADCDPNTQASCECPEGYILDDGFICT). N-linked (GlcNAc...) asparagine glycosylation is present at N382. Residue N409 is glycosylated (N-linked (GlcNAc...) asparagine). In terms of domain architecture, EGF-like 6; calcium-binding spans 441-481 (DIDECENGGFCSGVCHNLPGTFECICGPDSALARHIGTDCD). The interval 481–515 (DSGKVDGGDSGSGEPPPSPTPGSTLTPPAVGLVHS) is involved in alpha-L/beta-2 and alpha-M/beta-2 integrin binding. The disordered stretch occupies residues 484 to 506 (KVDGGDSGSGEPPPSPTPGSTLT). S490 and S492 each carry an O-linked (Xyl...) (chondroitin sulfate) serine glycan. Residues 516-539 (GLLIGISIASLCLVVALLALLCHL) traverse the membrane as a helical segment. Topologically, residues 540–575 (RKKQGAARAKMEYKCAAPSKEVVLQHVRTERTPQRL) are cytoplasmic.

In terms of assembly, interacts with ITGAL, ITGAM and ITGB2. Interacts with thrombin/F2; this interaction switches the specificity of thrombin from a procoagulant to an anticoagulant and antifibrinolytic protease. Interacts with ANGP1 and ANGP2; these interactions significantly inhibit the generation of activated PC and TAFIa/CPB2 by the thrombin/thrombomodulin complex. Interacts with PF4; this interaction enhances generation of activated protein C. Interacts with HMGB1; this interaction inhibits HMGB1 inflammatory activity. N-glycosylated. Post-translationally, the iron and 2-oxoglutarate dependent 3-hydroxylation of aspartate and asparagine is (R) stereospecific within EGF domains. As to expression, endothelial cells are unique in synthesizing thrombomodulin.

The protein resides in the membrane. In terms of biological role, endothelial cell receptor that plays a critical role in regulating several physiological processes including hemostasis, coagulation, fibrinolysis, inflammation, and angiogenesis. Acts as a cofactor for thrombin activation of protein C/PROC on the surface of vascular endothelial cells leading to initiation of the activated protein C anticoagulant pathway. Also accelerates the activation of the plasma carboxypeptidase B2/CPB2, which catalyzes removal of C-terminal basic amino acids from its substrates including kinins or anaphylatoxins leading to fibrinolysis inhibition. Plays critical protective roles in changing the cleavage specificity of protease-activated receptor 1/PAR1, inhibiting endothelial cell permeability and inflammation. Suppresses inflammation distinctly from its anticoagulant cofactor activity by sequestering HMGB1 thereby preventing it from engaging cellular receptors such as RAGE and contributing to the inflammatory response. The protein is Thrombomodulin (THBD) of Homo sapiens (Human).